The following is a 161-amino-acid chain: C-type natriuretic peptide (161 aa).

Positions 1-22 are cleaved as a signal peptide; the sequence is MFASRLAALGLLLLALVLDGKP. The tract at residues 19 to 135 is disordered; the sequence is DGKPAPPPQP…GGGGSRRLKG (117 aa). Positions 23-139 are excised as a propeptide; the sequence is APPPQPLRKA…SRRLKGLPKK (117 aa). Low complexity-rich tracts occupy residues 29–60 and 76–93; these read LRKA…SSGP and AAPT…AASR. Residues 94-104 show a composition bias toward basic and acidic residues; the sequence is LLRDLRPDGKQ. Residues 120-130 show a composition bias toward gly residues; it reads GGGGGGGGGGS. Cys145 and Cys161 are joined by a disulfide.

The protein belongs to the natriuretic peptide family. Expressed by the venom gland.

It localises to the secreted. Snake venom natriuretic peptide that has a vasorelaxant activity in rat aortic strips and a diuretic potency in anesthetized rats. May act by activating natriuretic receptors (NPR1 and/or NPR2). The polypeptide is C-type natriuretic peptide (Rhabdophis tigrinus tigrinus (Tiger keelback snake)).